A 195-amino-acid chain; its full sequence is Nucleoside triphosphate pyrophosphatase (195 aa).

The active-site Proton acceptor is the aspartate 76.

It belongs to the Maf family. The cofactor is a divalent metal cation.

The protein resides in the cytoplasm. The catalysed reaction is a ribonucleoside 5'-triphosphate + H2O = a ribonucleoside 5'-phosphate + diphosphate + H(+). It catalyses the reaction a 2'-deoxyribonucleoside 5'-triphosphate + H2O = a 2'-deoxyribonucleoside 5'-phosphate + diphosphate + H(+). In terms of biological role, nucleoside triphosphate pyrophosphatase. May have a dual role in cell division arrest and in preventing the incorporation of modified nucleotides into cellular nucleic acids. This Pelagibacter ubique (strain HTCC1062) protein is Nucleoside triphosphate pyrophosphatase.